The chain runs to 1090 residues: ATP-dependent helicase/deoxyribonuclease subunit B (1090 aa).

7-14 contributes to the ATP binding site; that stretch reads GPVGSGKS. 4 residues coordinate [4Fe-4S] cluster: C719, C1035, C1038, and C1044.

The protein belongs to the helicase family. AddB/RexB type 1 subfamily. As to quaternary structure, heterodimer of AddA and AddB. Mg(2+) serves as cofactor. It depends on [4Fe-4S] cluster as a cofactor.

Functionally, the heterodimer acts as both an ATP-dependent DNA helicase and an ATP-dependent, dual-direction single-stranded exonuclease. Recognizes the chi site generating a DNA molecule suitable for the initiation of homologous recombination. The AddB subunit has 5' -&gt; 3' nuclease activity but not helicase activity. This is ATP-dependent helicase/deoxyribonuclease subunit B from Carboxydothermus hydrogenoformans (strain ATCC BAA-161 / DSM 6008 / Z-2901).